The sequence spans 92 residues: DNA-directed RNA polymerase subunit omega (92 aa).

Belongs to the RNA polymerase subunit omega family. The RNAP catalytic core consists of 2 alpha, 1 beta, 1 beta' and 1 omega subunit. When a sigma factor is associated with the core the holoenzyme is formed, which can initiate transcription.

It carries out the reaction RNA(n) + a ribonucleoside 5'-triphosphate = RNA(n+1) + diphosphate. Its function is as follows. Promotes RNA polymerase assembly. Latches the N- and C-terminal regions of the beta' subunit thereby facilitating its interaction with the beta and alpha subunits. This is DNA-directed RNA polymerase subunit omega from Acinetobacter baumannii (strain AB307-0294).